Consider the following 343-residue polypeptide: Protein RecA (343 aa).

An ATP-binding site is contributed by 64 to 71 (GPESSGKT).

The protein belongs to the RecA family.

The protein localises to the cytoplasm. Can catalyze the hydrolysis of ATP in the presence of single-stranded DNA, the ATP-dependent uptake of single-stranded DNA by duplex DNA, and the ATP-dependent hybridization of homologous single-stranded DNAs. It interacts with LexA causing its activation and leading to its autocatalytic cleavage. This Cereibacter sphaeroides (strain ATCC 17023 / DSM 158 / JCM 6121 / CCUG 31486 / LMG 2827 / NBRC 12203 / NCIMB 8253 / ATH 2.4.1.) (Rhodobacter sphaeroides) protein is Protein RecA.